Reading from the N-terminus, the 230-residue chain is Ion-translocating oxidoreductase complex subunit E (230 aa).

6 helical membrane passes run 18-38, 39-59, 63-83, 86-106, 128-148, and 182-202; these read ALVQ…ATNA, LGLG…ISTL, TPTE…VSAV, LINA…PLIV, ALDG…LGAM, and PFLL…MLAG.

It belongs to the NqrDE/RnfAE family. In terms of assembly, the complex is composed of six subunits: RsxA, RsxB, RsxC, RsxD, RsxE and RsxG.

The protein resides in the cell inner membrane. In terms of biological role, part of a membrane-bound complex that couples electron transfer with translocation of ions across the membrane. Required to maintain the reduced state of SoxR. The polypeptide is Ion-translocating oxidoreductase complex subunit E (Escherichia fergusonii (strain ATCC 35469 / DSM 13698 / CCUG 18766 / IAM 14443 / JCM 21226 / LMG 7866 / NBRC 102419 / NCTC 12128 / CDC 0568-73)).